The primary structure comprises 200 residues: Probable gluconokinase (200 aa).

An ATP-binding site is contributed by 34-41; the sequence is GVSGSGKT.

Belongs to the gluconokinase GntK/GntV family.

The enzyme catalyses D-gluconate + ATP = 6-phospho-D-gluconate + ADP + H(+). It functions in the pathway carbohydrate acid metabolism; D-gluconate degradation. The chain is Probable gluconokinase from Dictyostelium discoideum (Social amoeba).